A 206-amino-acid chain; its full sequence is Pyrrolidone-carboxylate peptidase (206 aa).

Active-site residues include glutamate 78, cysteine 141, and histidine 165.

The protein belongs to the peptidase C15 family. In terms of assembly, homotetramer.

The protein localises to the cytoplasm. The catalysed reaction is Release of an N-terminal pyroglutamyl group from a polypeptide, the second amino acid generally not being Pro.. In terms of biological role, removes 5-oxoproline from various penultimate amino acid residues except L-proline. The sequence is that of Pyrrolidone-carboxylate peptidase from Thermococcus kodakarensis (strain ATCC BAA-918 / JCM 12380 / KOD1) (Pyrococcus kodakaraensis (strain KOD1)).